We begin with the raw amino-acid sequence, 343 residues long: Glutamine synthetase (343 aa).

Residues 3-87 (FKAEYIWIDG…CEVLNIDLTP (85 aa)) form the GS beta-grasp domain. The region spanning 92-343 (TRAALAEVAE…CSALEKAGQV (252 aa)) is the GS catalytic domain. Residues Glu113, Glu115, Glu174, and Glu181 each coordinate Mg(2+). Residue Glu279 coordinates L-glutamate.

It belongs to the glutamine synthetase family. Homooctamer and homotetramer. It depends on Mg(2+) as a cofactor.

It is found in the cytoplasm. The enzyme catalyses L-glutamate + NH4(+) + ATP = L-glutamine + ADP + phosphate + H(+). Its function is as follows. Catalyzes the ATP-dependent biosynthesis of glutamine from glutamate and ammonia. This chain is Glutamine synthetase, found in Streptomyces viridochromogenes.